The following is a 203-amino-acid chain: Large ribosomal subunit protein uL13 (203 aa).

A2 carries the post-translational modification N-acetylalanine. A Citrulline modification is found at R59. The residue at position 77 (S77) is a Phosphoserine; by ZIPK/DAPK3. R140 carries the post-translational modification Citrulline. K191 carries the N6-acetyllysine modification.

The protein belongs to the universal ribosomal protein uL13 family. Component of the 60S ribosome. Component of the GAIT complex. Interacts with EIF4G1. In terms of processing, phosphorylation at Ser-77 upon interferon-gamma treatment in macrophages involves a DAPK1-DAPK3 kinase cascade and is causing release from the ribosome, association with the GAIT complex and subsequent involvement in transcript-selective translation inhibition. Citrullinated by PADI4.

It localises to the cytoplasm. Its function is as follows. Associated with ribosomes but is not required for canonical ribosome function and has extra-ribosomal functions. Component of the GAIT (gamma interferon-activated inhibitor of translation) complex which mediates interferon-gamma-induced transcript-selective translation inhibition in inflammation processes. Upon interferon-gamma activation and subsequent phosphorylation dissociates from the ribosome and assembles into the GAIT complex which binds to stem loop-containing GAIT elements in the 3'-UTR of diverse inflammatory mRNAs (such as ceruplasmin) and suppresses their translation. In the GAIT complex interacts with m7G cap-bound eIF4G at or near the eIF3-binding site and blocks the recruitment of the 43S ribosomal complex. Involved in methylation of rRNA. This Mus musculus (Mouse) protein is Large ribosomal subunit protein uL13 (Rpl13a).